The chain runs to 356 residues: Peptide chain release factor 1 (356 aa).

Gln-233 carries the post-translational modification N5-methylglutamine.

It belongs to the prokaryotic/mitochondrial release factor family. Post-translationally, methylated by PrmC. Methylation increases the termination efficiency of RF1.

The protein resides in the cytoplasm. In terms of biological role, peptide chain release factor 1 directs the termination of translation in response to the peptide chain termination codons UAG and UAA. The polypeptide is Peptide chain release factor 1 (Oceanobacillus iheyensis (strain DSM 14371 / CIP 107618 / JCM 11309 / KCTC 3954 / HTE831)).